We begin with the raw amino-acid sequence, 424 residues long: Ornithine aminotransferase (424 aa).

N6-(pyridoxal phosphate)lysine is present on Lys-272. Residue Lys-390 forms a Glycyl lysine isopeptide (Lys-Gly) (interchain with G-Cter in ubiquitin) linkage.

It belongs to the class-III pyridoxal-phosphate-dependent aminotransferase family. Requires pyridoxal 5'-phosphate as cofactor.

The protein resides in the cytoplasm. The catalysed reaction is a 2-oxocarboxylate + L-ornithine = L-glutamate 5-semialdehyde + an L-alpha-amino acid. The protein operates within amino-acid biosynthesis; L-proline biosynthesis; L-glutamate 5-semialdehyde from L-ornithine: step 1/1. With respect to regulation, by arginine and urea. Catalyzes the transamination of ornithine into L-glutamate gamma-semialdehyde, the second step of arginine degradation. In Saccharomyces cerevisiae (strain ATCC 204508 / S288c) (Baker's yeast), this protein is Ornithine aminotransferase (CAR2).